We begin with the raw amino-acid sequence, 257 residues long: Acetylglutamate kinase (257 aa).

Residues 43–44, Arg-65, and Asn-157 contribute to the substrate site; that span reads GG.

Belongs to the acetylglutamate kinase family. ArgB subfamily.

It is found in the cytoplasm. It catalyses the reaction N-acetyl-L-glutamate + ATP = N-acetyl-L-glutamyl 5-phosphate + ADP. Its pathway is amino-acid biosynthesis; L-arginine biosynthesis; N(2)-acetyl-L-ornithine from L-glutamate: step 2/4. Its function is as follows. Catalyzes the ATP-dependent phosphorylation of N-acetyl-L-glutamate. This chain is Acetylglutamate kinase, found in Actinobacillus succinogenes (strain ATCC 55618 / DSM 22257 / CCUG 43843 / 130Z).